The sequence spans 284 residues: Probable ADP-ribose 1''-phosphate phosphatase YML087W (284 aa).

4 residues coordinate substrate: Asp23, Gln55, Asn80, and Asp90. The 197-residue stretch at 34-230 folds into the Macro domain; sequence ESIPHAYIQN…HISKELKNVL (197 aa). Active-site residues include Asn80 and Asp90. The cysteines at positions 128 and 136 are disulfide-linked. The active site involves His145. Substrate is bound by residues Thr148 and Thr195.

In terms of assembly, homodimer.

The enzyme catalyses ADP-alpha-D-ribose 1''-phosphate + H2O = ADP-D-ribose + phosphate. Its function is as follows. Highly specific phosphatase involved in the metabolism of ADP-ribose 1''-phosphate (Appr1p) which is produced as a consequence of tRNA splicing. + phosphate. The protein is Probable ADP-ribose 1''-phosphate phosphatase YML087W of Saccharomyces cerevisiae (strain ATCC 204508 / S288c) (Baker's yeast).